A 119-amino-acid chain; its full sequence is ATP-dependent Clp protease adapter protein ClpS (119 aa).

It belongs to the ClpS family. As to quaternary structure, binds to the N-terminal domain of the chaperone ClpA.

Its function is as follows. Involved in the modulation of the specificity of the ClpAP-mediated ATP-dependent protein degradation. The sequence is that of ATP-dependent Clp protease adapter protein ClpS from Marinobacter nauticus (strain ATCC 700491 / DSM 11845 / VT8) (Marinobacter aquaeolei).